The sequence spans 147 residues: Large ribosomal subunit protein uL13 (147 aa).

Belongs to the universal ribosomal protein uL13 family. As to quaternary structure, part of the 50S ribosomal subunit.

Its function is as follows. This protein is one of the early assembly proteins of the 50S ribosomal subunit, although it is not seen to bind rRNA by itself. It is important during the early stages of 50S assembly. In Beutenbergia cavernae (strain ATCC BAA-8 / DSM 12333 / CCUG 43141 / JCM 11478 / NBRC 16432 / NCIMB 13614 / HKI 0122), this protein is Large ribosomal subunit protein uL13.